A 194-amino-acid polypeptide reads, in one-letter code: MGKLRPSRGRGFADVSQQIRVRNRPSWACRRGGPLGTLLANAGPSTVPVTPTAGSCQPSPLSPGGSDPPPPPRAHVSPQEAPLGQVPGAEWLPPTRGLLCKDVSSSPGPSFHLGGPGLPGHAGPCGPRARPAQGLAGRGGNVGEGSESPLGTLPCSVPASQQLLRGRSHLQGSLAALGEARGGGAAFSWGQEGP.

Residues 25–156 (PSWACRRGGP…ESPLGTLPCS (132 aa)) are disordered. Positions 43 to 57 (GPSTVPVTPTAGSCQ) are enriched in polar residues. Residues 104-113 (SSSPGPSFHL) are compositionally biased toward low complexity.

This is an uncharacterized protein from Homo sapiens (Human).